A 620-amino-acid polypeptide reads, in one-letter code: Apoptosis regulator MC163R (620 aa).

The helical transmembrane segment at 113 to 133 (APLPLLLLPLLLPPMILLFFL) threads the bilayer.

Its subcellular location is the host mitochondrion. The protein localises to the host membrane. In terms of biological role, plays a role in the inhibition of host apoptosis. Prevents host TNF-alpha-induced mitochondrial membrane permeabilization and reduces caspase-3/CASP3 and PARP1 cleavage induced by the intrinsic apoptotic pathway. This is Apoptosis regulator MC163R (MC163R) from Homo sapiens (Human).